Consider the following 360-residue polypeptide: Fe(3+) ions import ATP-binding protein FbpC (360 aa).

Positions 4 to 236 (LEIKGLHKHY…PKDRMIAEFL (233 aa)) constitute an ABC transporter domain. 36 to 43 (GPSGCGKT) serves as a coordination point for ATP.

This sequence belongs to the ABC transporter superfamily. Fe(3+) ion importer (TC 3.A.1.10) family. In terms of assembly, the complex is composed of two ATP-binding proteins (FbpC), two transmembrane proteins (FbpB) and a solute-binding protein (FbpA).

Its subcellular location is the cell inner membrane. The enzyme catalyses Fe(3+)(out) + ATP + H2O = Fe(3+)(in) + ADP + phosphate + H(+). Its function is as follows. Part of the ABC transporter complex FbpABC involved in Fe(3+) ions import. Responsible for energy coupling to the transport system. In Mesorhizobium japonicum (strain LMG 29417 / CECT 9101 / MAFF 303099) (Mesorhizobium loti (strain MAFF 303099)), this protein is Fe(3+) ions import ATP-binding protein FbpC.